A 126-amino-acid chain; its full sequence is Ribosome-binding factor A (126 aa).

Belongs to the RbfA family. Monomer. Binds 30S ribosomal subunits, but not 50S ribosomal subunits or 70S ribosomes.

The protein localises to the cytoplasm. Its function is as follows. One of several proteins that assist in the late maturation steps of the functional core of the 30S ribosomal subunit. Associates with free 30S ribosomal subunits (but not with 30S subunits that are part of 70S ribosomes or polysomes). Required for efficient processing of 16S rRNA. May interact with the 5'-terminal helix region of 16S rRNA. This Halorhodospira halophila (strain DSM 244 / SL1) (Ectothiorhodospira halophila (strain DSM 244 / SL1)) protein is Ribosome-binding factor A.